A 365-amino-acid polypeptide reads, in one-letter code: Glutamate 5-kinase 1 (365 aa).

Lysine 9 is an ATP binding site. Residues serine 49, aspartate 136, and asparagine 148 each coordinate substrate. ATP is bound by residues 168–169 (TD) and 210–216 (TGGMKSK). A PUA domain is found at 276–353 (SGKITVDEGA…DEFHHEEGIE (78 aa)).

This sequence belongs to the glutamate 5-kinase family.

It localises to the cytoplasm. The enzyme catalyses L-glutamate + ATP = L-glutamyl 5-phosphate + ADP. The protein operates within amino-acid biosynthesis; L-proline biosynthesis; L-glutamate 5-semialdehyde from L-glutamate: step 1/2. In terms of biological role, catalyzes the transfer of a phosphate group to glutamate to form L-glutamate 5-phosphate. In Bacillus licheniformis (strain ATCC 14580 / DSM 13 / JCM 2505 / CCUG 7422 / NBRC 12200 / NCIMB 9375 / NCTC 10341 / NRRL NRS-1264 / Gibson 46), this protein is Glutamate 5-kinase 1.